The chain runs to 248 residues: Triosephosphate isomerase (248 aa).

Substrate-binding residues include Asn11 and Lys13. His95 serves as the catalytic Electrophile. Glu165 (proton acceptor) is an active-site residue.

The protein belongs to the triosephosphate isomerase family. Homodimer.

It localises to the cytoplasm. It carries out the reaction dihydroxyacetone phosphate = methylglyoxal + phosphate. The catalysed reaction is D-glyceraldehyde 3-phosphate = dihydroxyacetone phosphate. Its pathway is carbohydrate degradation; glycolysis; D-glyceraldehyde 3-phosphate from glycerone phosphate: step 1/1. It functions in the pathway carbohydrate biosynthesis; gluconeogenesis. Its function is as follows. Triosephosphate isomerase is an extremely efficient metabolic enzyme that catalyzes the interconversion between dihydroxyacetone phosphate (DHAP) and D-glyceraldehyde-3-phosphate (G3P) in glycolysis and gluconeogenesis. Functionally, it is also responsible for the non-negligible production of methylglyoxal a reactive cytotoxic side-product that modifies and can alter proteins, DNA and lipids. This is Triosephosphate isomerase (tpi1) from Xenopus laevis (African clawed frog).